A 396-amino-acid chain; its full sequence is Interleukin enhancer-binding factor 2 homolog (396 aa).

The region spanning 22 to 379 is the DZF domain; the sequence is KTFVPRHPFD…KKEGDLEEDI (358 aa). The interval 367 to 396 is disordered; that stretch reads PTDKKEGDLEEDIDMIENENEEEGSDDGAE. A compositionally biased stretch (acidic residues) spans 374–396; that stretch reads DLEEDIDMIENENEEEGSDDGAE.

The protein localises to the nucleus. In terms of biological role, may regulate transcription of undefined genes. This is Interleukin enhancer-binding factor 2 homolog from Drosophila melanogaster (Fruit fly).